Reading from the N-terminus, the 353-residue chain is Photosystem II protein D1 (353 aa).

Threonine 2 is subject to N-acetylthreonine. Position 2 is a phosphothreonine (threonine 2). 3 helical membrane-spanning segments follow: residues 29 to 46 (YIGW…TATS), 118 to 133 (HFLL…EWEL), and 142 to 156 (WIAV…AATA). Histidine 118 is a binding site for chlorophyll a. A pheophytin a-binding site is contributed by tyrosine 126. Residues aspartate 170 and glutamate 189 each coordinate [CaMn4O5] cluster. Residues 197–218 (FHMLGVAGVFGGSLFSAMHGSL) traverse the membrane as a helical segment. Residue histidine 198 coordinates chlorophyll a. A quinone-binding positions include histidine 215 and 264–265 (SF). Position 215 (histidine 215) interacts with Fe cation. Histidine 272 is a binding site for Fe cation. A helical membrane pass occupies residues 274–288 (FLAAWPVAGIWFTAL). [CaMn4O5] cluster contacts are provided by histidine 332, glutamate 333, aspartate 342, and alanine 344. The propeptide occupies 345–353 (AVESISIGG).

The protein belongs to the reaction center PufL/M/PsbA/D family. PSII is composed of 1 copy each of membrane proteins PsbA, PsbB, PsbC, PsbD, PsbE, PsbF, PsbH, PsbI, PsbJ, PsbK, PsbL, PsbM, PsbT, PsbX, PsbY, PsbZ, Psb30/Ycf12, at least 3 peripheral proteins of the oxygen-evolving complex and a large number of cofactors. It forms dimeric complexes. It depends on The D1/D2 heterodimer binds P680, chlorophylls that are the primary electron donor of PSII, and subsequent electron acceptors. It shares a non-heme iron and each subunit binds pheophytin, quinone, additional chlorophylls, carotenoids and lipids. D1 provides most of the ligands for the Mn4-Ca-O5 cluster of the oxygen-evolving complex (OEC). There is also a Cl(-1) ion associated with D1 and D2, which is required for oxygen evolution. The PSII complex binds additional chlorophylls, carotenoids and specific lipids. as a cofactor. In terms of processing, tyr-161 forms a radical intermediate that is referred to as redox-active TyrZ, YZ or Y-Z. C-terminally processed by CTPA; processing is essential to allow assembly of the oxygen-evolving complex and thus photosynthetic growth.

Its subcellular location is the plastid. It localises to the chloroplast thylakoid membrane. It carries out the reaction 2 a plastoquinone + 4 hnu + 2 H2O = 2 a plastoquinol + O2. Photosystem II (PSII) is a light-driven water:plastoquinone oxidoreductase that uses light energy to abstract electrons from H(2)O, generating O(2) and a proton gradient subsequently used for ATP formation. It consists of a core antenna complex that captures photons, and an electron transfer chain that converts photonic excitation into a charge separation. The D1/D2 (PsbA/PsbD) reaction center heterodimer binds P680, the primary electron donor of PSII as well as several subsequent electron acceptors. The polypeptide is Photosystem II protein D1 (Pinus koraiensis (Korean pine)).